A 430-amino-acid polypeptide reads, in one-letter code: Small ribosomal subunit protein uS9m (430 aa).

The transit peptide at 1-34 (MLSRLFLRHSNLRFVTLVSSKSNSQIFSSFIRPL) directs the protein to the mitochondrion. The segment at 32–97 (RPLSTNSSGG…GGEGKWPEEP (66 aa)) is disordered. The span at 39–48 (SGGGGNGDGN) shows a compositional bias: gly residues. Over residues 68 to 79 (GPFSSDDSFGSS) the composition is skewed to low complexity. A compositionally biased stretch (gly residues) spans 80–91 (GVAGSGLPGGEG).

Belongs to the universal ribosomal protein uS9 family. Interacts (via C terminus) with PIA2. Component of the mitochondrial ribosome small subunit. As to expression, expressed in root tips, young leaves, flowers and siliques.

The protein localises to the mitochondrion. Its function is as follows. Mitochondrial ribosomal protein required for central cell maturation. May work together with PIA2 in controlling female gametophyte development, possibly by regulating the expression of some mitochondrial proteins. This is Small ribosomal subunit protein uS9m from Arabidopsis thaliana (Mouse-ear cress).